A 355-amino-acid polypeptide reads, in one-letter code: 3-dehydroquinate synthase (355 aa).

NAD(+)-binding positions include 66 to 71 (SGETTK), 100 to 104 (GATGD), 124 to 125 (TT), K136, K145, and 163 to 166 (FLET). The Zn(2+) site is built by E178, H242, and H256.

The protein belongs to the sugar phosphate cyclases superfamily. Dehydroquinate synthase family. Requires Co(2+) as cofactor. It depends on Zn(2+) as a cofactor. NAD(+) serves as cofactor.

It is found in the cytoplasm. The catalysed reaction is 7-phospho-2-dehydro-3-deoxy-D-arabino-heptonate = 3-dehydroquinate + phosphate. Its pathway is metabolic intermediate biosynthesis; chorismate biosynthesis; chorismate from D-erythrose 4-phosphate and phosphoenolpyruvate: step 2/7. Catalyzes the conversion of 3-deoxy-D-arabino-heptulosonate 7-phosphate (DAHP) to dehydroquinate (DHQ). This chain is 3-dehydroquinate synthase, found in Staphylococcus saprophyticus subsp. saprophyticus (strain ATCC 15305 / DSM 20229 / NCIMB 8711 / NCTC 7292 / S-41).